The sequence spans 352 residues: Thiamine-monophosphate kinase (352 aa).

Mg(2+) is bound by residues Asp-58, Thr-73, and Asp-75. His-82 contacts substrate. The Mg(2+) site is built by Asp-103 and Asp-151. Residues 150 to 151 (GD) and Arg-177 each bind ATP. Asp-239 serves as a coordination point for Mg(2+). Ser-241 contributes to the ATP binding site. Asp-242 is a Mg(2+) binding site. Substrate-binding residues include Asp-294 and Trp-349.

It belongs to the thiamine-monophosphate kinase family.

The catalysed reaction is thiamine phosphate + ATP = thiamine diphosphate + ADP. It participates in cofactor biosynthesis; thiamine diphosphate biosynthesis; thiamine diphosphate from thiamine phosphate: step 1/1. Functionally, catalyzes the ATP-dependent phosphorylation of thiamine-monophosphate (TMP) to form thiamine-pyrophosphate (TPP), the active form of vitamin B1. In Caulobacter vibrioides (strain ATCC 19089 / CIP 103742 / CB 15) (Caulobacter crescentus), this protein is Thiamine-monophosphate kinase.